The primary structure comprises 146 residues: Large ribosomal subunit protein uL15 (146 aa).

Residues 1-58 (MNLSNLRAPKKANRNRKRVGRGMGSGHGKTSTRGHKGQRSRSGSRSMRGFEGGQMPLH) form a disordered region. Basic residues-rich tracts occupy residues 8 to 20 (APKKANRNRKRVG) and 30 to 39 (TSTRGHKGQR). Positions 40 to 49 (SRSGSRSMRG) are enriched in low complexity.

This sequence belongs to the universal ribosomal protein uL15 family. As to quaternary structure, part of the 50S ribosomal subunit.

Functionally, binds to the 23S rRNA. The protein is Large ribosomal subunit protein uL15 of Acidobacterium capsulatum (strain ATCC 51196 / DSM 11244 / BCRC 80197 / JCM 7670 / NBRC 15755 / NCIMB 13165 / 161).